The primary structure comprises 987 residues: Voltage-gated delayed rectifier potassium channel KCNH1 (987 aa).

Residues 1–220 (MTMAGGRKGL…LHYCVFKTTW (220 aa)) lie on the Cytoplasmic side of the membrane. The PAS domain occupies 14–94 (QNTFLENIVR…QTFENYEMNS (81 aa)). Positions 93-145 (NSFEILMYKKNRTPVWFFVKIAPIRNEQDKVVLFLCTFSDITAFKQPIEDDSC) constitute a PAC domain. Residues 151–162 (FARLTRALTSSR) form a required for phosphatidylinositol bisphosphate binding region. A helical membrane pass occupies residues 221–241 (DWIILILTFYTAILVPYNVSF). At 242–248 (KTRQNNV) the chain is on the extracellular side. The helical transmembrane segment at 249–269 (AWLVVDSIVDVIFLVDIVLNF) threads the bilayer. The Cytoplasmic segment spans residues 270-290 (HTTFVGPAGEVISDPKLIRMN). A helical membrane pass occupies residues 291–309 (YLKTWFVIDLLSCLPYDVI). At 310–345 (NAFENVDEVSAFMGDPGKIGFADQIPPPLEGRESQG) the chain is on the extracellular side. The chain crosses the membrane as a helical; Voltage-sensor span at residues 346–368 (ISSLFSSLKVVRLLRLGRVARKL). Topologically, residues 369–377 (DHYIEYGAA) are cytoplasmic. Residues 378–399 (VLVLLVCVFGLAAHWMACIWYS) traverse the membrane as a helical segment. The Extracellular segment spans residues 400–448 (IGDYEIFDEDTKTIRNNSWLYQLAMDIGTPYQFNGSGSGKWEGGPSKNS). N-linked (GlcNAc...) asparagine glycans are attached at residues Asn-415 and Asn-433. Positions 449 to 470 (VYISSLYFTMTSLTSVGFGNIA) form an intramembrane region, pore-forming. Residues 463–468 (SVGFGN) carry the Selectivity filter motif. Topologically, residues 471-477 (PSTDIEK) are extracellular. The helical transmembrane segment at 478 to 498 (IFAVAIMMIGSLLYATIFGNV) threads the bilayer. Topologically, residues 499 to 987 (TTIFQQMYAN…ESERDIFGAS (489 aa)) are cytoplasmic. A calmodulin-binding region spans residues 673 to 770 (KRDALQKVLE…LDDLDVEKGS (98 aa)). Residues 699-701 (YNL) form an interaction with cyclic nucleotide-binding pocket region. The interval 922-962 (AAVLEVKHELKEDIKALSTKMTSIEKQLSEILRILTSRRSS) is CAD (involved in subunit assembly). Positions 960-987 (RSSQSPQELFEISRPQSPESERDIFGAS) are disordered. Ser-972, Ser-976, and Ser-979 each carry phosphoserine. Residues 978 to 987 (ESERDIFGAS) show a composition bias toward basic and acidic residues.

This sequence belongs to the potassium channel family. H (Eag) (TC 1.A.1.20) subfamily. Kv10.1/KCNH1 sub-subfamily. As to quaternary structure, homomultimer. The potassium channel is composed of a homo- or heterotetrameric complex of pore-forming alpha subunits that can associate with modulating beta subunits. Heteromultimer with KCNH5/EAG2. Interacts with ALG10B. Interacts with RABEP1. Interacts (via C-terminus) with CTTN. Interacts (via C-terminal cytoplasmic region) with Ca(2+)-bound calmodulin. In terms of processing, channel activity is regulated via tyrosine phosphorylation/dephosphorylation by SRC and PTPN6. As to expression, detected in cerebellum, cortex and retina.

Its subcellular location is the cell membrane. It is found in the nucleus inner membrane. It localises to the cell projection. The protein resides in the dendrite. The protein localises to the axon. Its subcellular location is the presynaptic cell membrane. It is found in the perikaryon. It localises to the postsynaptic density membrane. The protein resides in the early endosome membrane. It catalyses the reaction K(+)(in) = K(+)(out). With respect to regulation, channel activity is inhibited by interaction with Ca(2+)-bound calmodulin. Interaction of a single pore-forming alpha subunit with a calmodulin chain is sufficient to promote channel closure. Extracellular magnesium ion concentrations up to 4 mM modulate channel activity by slowing down current activation in a reversible fashion. Channel activity is not regulated by cyclic nucleotides. Channel activity is inhibited by binding intracellular phosphatidylinositol-3,5-bisphosphate and phosphatidylinositol-4,5-bisphosphate (PIP2), but is not inhibited by phosphatidylinositol 4-phosphate. Pore-forming (alpha) subunit of a voltage-gated delayed rectifier potassium channel that mediates outward-rectifying potassium currents which, on depolarization, reaches a steady-state level and do not inactivate. The activation kinetics depend on the prepulse potential and external divalent cation concentration. With negative prepulses, the current activation is delayed and slowed down several fold, whereas more positive prepulses speed up activation. The time course of activation is biphasic with a fast and a slowly activating current component. Activates at more positive membrane potentials and exhibit a steeper activation curve. Channel properties are modulated by subunit assembly. Mediates IK(NI) current in myoblasts. Involved in the regulation of cell proliferation and differentiation, in particular adipogenic and osteogenic differentiation in bone marrow-derived mesenchymal stem cells (MSCs). This Bos taurus (Bovine) protein is Voltage-gated delayed rectifier potassium channel KCNH1.